The chain runs to 135 residues: Protein E6 (135 aa).

Zinc fingers lie at residues 23–59 (CTFC…CTAC) and 96–132 (CRVC…CRIC).

This sequence belongs to the papillomaviridae E6 protein family. As to quaternary structure, forms homodimers. Interacts with ubiquitin-protein ligase UBE3A/E6-AP; this interaction stimulates UBE3A ubiquitin activity. Interacts with host BAK1.

It is found in the host cytoplasm. The protein resides in the host nucleus. In terms of biological role, plays a major role in the induction and maintenance of cellular transformation. E6 associates with host UBE3A/E6-AP ubiquitin-protein ligase and modulates its activity. Protects host keratinocytes from apoptosis by mediating the degradation of host BAK1. May also inhibit host immune response. This chain is Protein E6, found in Mastomys natalensis papillomavirus (isolate African multimammate rat) (MnPV).